We begin with the raw amino-acid sequence, 490 residues long: GTPase Der (490 aa).

EngA-type G domains lie at 3–166 (PVVA…AEAM) and 200–373 (IKLA…DSAT). GTP is bound by residues 9–16 (GRPNVGKS), 56–60 (DTGGI), 118–121 (NKVD), 206–213 (GKPNVGKS), 253–257 (DTAGV), and 318–321 (NKWD). One can recognise a KH-like domain in the interval 374 to 458 (RRVSTSMLTR…PIQLRFQEGG (85 aa)). Residues 470–490 (TVSQERRRKRMVGHIRDKNKD) form a disordered region.

This sequence belongs to the TRAFAC class TrmE-Era-EngA-EngB-Septin-like GTPase superfamily. EngA (Der) GTPase family. In terms of assembly, associates with the 50S ribosomal subunit.

Its function is as follows. GTPase that plays an essential role in the late steps of ribosome biogenesis. The sequence is that of GTPase Der from Shewanella pealeana (strain ATCC 700345 / ANG-SQ1).